The chain runs to 265 residues: SPbeta prophage-derived uncharacterized protein YomU (265 aa).

The tract at residues 238–265 is disordered; the sequence is KADGTKGVVTSDEGTGSSQSSDLGGTTE. Residues 249 to 265 show a composition bias toward polar residues; it reads DEGTGSSQSSDLGGTTE.

In Bacillus subtilis (strain 168), this protein is SPbeta prophage-derived uncharacterized protein YomU (yomU).